Reading from the N-terminus, the 1273-residue chain is Receptor-type tyrosine-protein phosphatase C (1273 aa).

The signal sequence occupies residues 1 to 23; that stretch reads MYLWLKLLAFSLALLGPEVFVTG. At 24 to 546 the chain is on the extracellular side; sequence QGTTDDGLDT…KPQSTSYNSK (523 aa). The disordered stretch occupies residues 45–192; sequence LPARTTEFTP…TEIATPQTKP (148 aa). 3 stretches are compositionally biased toward polar residues: residues 50-77, 84-111, and 141-192; these read TEFT…SSTL, QPDS…TLTA, and RNST…QTKP. Asn-62 carries an N-linked (GlcNAc...) asparagine glycan. N-linked (GlcNAc...) asparagine glycosylation is found at Asn-142, Asn-153, Asn-164, Asn-178, Asn-200, Asn-245, Asn-250, Asn-271, Asn-282, Asn-327, Asn-333, Asn-371, Asn-374, Asn-471, and Asn-502. Fibronectin type-III domains are found at residues 361-452 and 453-545; these read PEML…TKAA and RPGK…SYNS. The chain crosses the membrane as a helical span at residues 547–567; that stretch reads ALIIFLVFLIIVTSIALLVVL. Residues 568-1273 lie on the Cytoplasmic side of the membrane; the sequence is YKIYDLRKKR…PMSPALTPSS (706 aa). Tyrosine-protein phosphatase domains are found at residues 622-881 and 913-1196; these read FLAE…LVEY and LEAE…MASI. The residue at position 652 (Tyr-652) is a Phosphotyrosine. Substrate is bound by residues Asp-790, 822 to 828, and Gln-866; that span reads CSAGVGR. Cys-822 acts as the Phosphocysteine intermediate in catalysis. Phosphoserine occurs at positions 944, 963, 966, 970, 973, 974, and 978. The tract at residues 960–984 is disordered; sequence LEMSKESEAESDESSDEDSDSEETS. The span at 968-981 shows a compositional bias: acidic residues; that stretch reads AESDESSDEDSDSE. Cys-1137 (phosphocysteine intermediate) is an active-site residue. Ser-1209 and Ser-1266 each carry phosphoserine. The disordered stretch occupies residues 1219 to 1273; sequence VDGAKQDANCVQPADPLNKAQEDSKEVGASEPASGSEEPEHSANGPMSPALTPSS.

Belongs to the protein-tyrosine phosphatase family. Receptor class 1/6 subfamily. Interacts with SKAP1. Interacts with DPP4; the interaction is enhanced in an interleukin-12-dependent manner in activated lymphocytes. Binds GANAB and PRKCSH. Interacts with CD53; this interaction stabilizes PTPRC on the membrane and is required for optimal phosphatase activity. Interacts with CLEC10A. Post-translationally, heavily N- and O-glycosylated. The cytoplasmic domain contains potential phosphorylation sites. Isoform 1 and isoform 2 are found in thymocyte and lymph node. Isoform 4 and isoform 3 are found in the lymph nod.

The protein localises to the cell membrane. It is found in the membrane raft. It localises to the synapse. It catalyses the reaction O-phospho-L-tyrosyl-[protein] + H2O = L-tyrosyl-[protein] + phosphate. Its function is as follows. Protein tyrosine-protein phosphatase required for T-cell activation through the antigen receptor. Acts as a positive regulator of T-cell coactivation upon binding to DPP4. The first PTPase domain has enzymatic activity, while the second one seems to affect the substrate specificity of the first one. Upon T-cell activation, recruits and dephosphorylates SKAP1 and FYN. Dephosphorylates LYN, and thereby modulates LYN activity. Interacts with CLEC10A at antigen presenting cell-T cell contact; CLEC10A on immature dendritic cells recognizes Tn antigen-carrying PTPRC/CD45 receptor on effector T cells and modulates T cell activation threshold to limit autoreactivity. This Rattus norvegicus (Rat) protein is Receptor-type tyrosine-protein phosphatase C (Ptprc).